Reading from the N-terminus, the 258-residue chain is Indole-3-glycerol phosphate synthase (258 aa).

The protein belongs to the TrpC family.

It catalyses the reaction 1-(2-carboxyphenylamino)-1-deoxy-D-ribulose 5-phosphate + H(+) = (1S,2R)-1-C-(indol-3-yl)glycerol 3-phosphate + CO2 + H2O. It functions in the pathway amino-acid biosynthesis; L-tryptophan biosynthesis; L-tryptophan from chorismate: step 4/5. This is Indole-3-glycerol phosphate synthase from Legionella pneumophila (strain Paris).